The sequence spans 61 residues: Small ribosomal subunit protein uS14 (61 aa).

C24, C27, C40, and C43 together coordinate Zn(2+).

Belongs to the universal ribosomal protein uS14 family. Zinc-binding uS14 subfamily. Part of the 30S ribosomal subunit. Contacts proteins S3 and S10. It depends on Zn(2+) as a cofactor.

Functionally, binds 16S rRNA, required for the assembly of 30S particles and may also be responsible for determining the conformation of the 16S rRNA at the A site. In Anaeromyxobacter sp. (strain Fw109-5), this protein is Small ribosomal subunit protein uS14.